Here is an 872-residue protein sequence, read N- to C-terminus: Alanine--tRNA ligase (872 aa).

Positions 567, 571, 669, and 673 each coordinate Zn(2+).

It belongs to the class-II aminoacyl-tRNA synthetase family. The cofactor is Zn(2+).

It is found in the cytoplasm. It carries out the reaction tRNA(Ala) + L-alanine + ATP = L-alanyl-tRNA(Ala) + AMP + diphosphate. Catalyzes the attachment of alanine to tRNA(Ala) in a two-step reaction: alanine is first activated by ATP to form Ala-AMP and then transferred to the acceptor end of tRNA(Ala). Also edits incorrectly charged Ser-tRNA(Ala) and Gly-tRNA(Ala) via its editing domain. In Streptococcus pyogenes serotype M28 (strain MGAS6180), this protein is Alanine--tRNA ligase.